The following is a 170-amino-acid chain: Transcriptional repressor NrdR (170 aa).

The segment at 3-34 (CPFCRHPDSRVVDSRTSEDGSSIRRRRQCPEC) is a zinc-finger region. The ATP-cone domain occupies 46 to 136 (LSVVKRSGVA…VYRGFSSLED (91 aa)). Residues 148–170 (RENEGDPDADGSADAPVRLTTSV) are disordered.

Belongs to the NrdR family. Zn(2+) is required as a cofactor.

In terms of biological role, negatively regulates transcription of bacterial ribonucleotide reductase nrd genes and operons by binding to NrdR-boxes. The protein is Transcriptional repressor NrdR of Beutenbergia cavernae (strain ATCC BAA-8 / DSM 12333 / CCUG 43141 / JCM 11478 / NBRC 16432 / NCIMB 13614 / HKI 0122).